Consider the following 440-residue polypeptide: Chromosome partition protein MukF (440 aa).

The interval 208 to 236 (LDETSGNLRELQDTLNAAGDKLQSQLLRI) is leucine-zipper.

It belongs to the MukF family. Interacts, and probably forms a ternary complex, with MukE and MukB via its C-terminal region. The complex formation is stimulated by calcium or magnesium. It is required for an interaction between MukE and MukB.

The protein localises to the cytoplasm. It localises to the nucleoid. Involved in chromosome condensation, segregation and cell cycle progression. May participate in facilitating chromosome segregation by condensation DNA from both sides of a centrally located replisome during cell division. Not required for mini-F plasmid partitioning. Probably acts via its interaction with MukB and MukE. Overexpression results in anucleate cells. It has a calcium binding activity. The polypeptide is Chromosome partition protein MukF (Histophilus somni (strain 2336) (Haemophilus somnus)).